Here is a 439-residue protein sequence, read N- to C-terminus: Ribosomal protein uS12 methylthiotransferase RimO (439 aa).

Residues 4-114 (PKVGFVSLGR…VVRAVHGVAP (111 aa)) enclose the MTTase N-terminal domain. A Radical SAM core domain is found at 133–370 (LTPRHYAYLK…MEHQQAISTA (238 aa)). [4Fe-4S] cluster-binding residues include Cys147, Cys151, and Cys154. The region spanning 373-439 (STRVGREIDV…EYDLWGERIA (67 aa)) is the TRAM domain.

It belongs to the methylthiotransferase family. RimO subfamily. It depends on [4Fe-4S] cluster as a cofactor.

It is found in the cytoplasm. It carries out the reaction L-aspartate(89)-[ribosomal protein uS12]-hydrogen + (sulfur carrier)-SH + AH2 + 2 S-adenosyl-L-methionine = 3-methylsulfanyl-L-aspartate(89)-[ribosomal protein uS12]-hydrogen + (sulfur carrier)-H + 5'-deoxyadenosine + L-methionine + A + S-adenosyl-L-homocysteine + 2 H(+). Functionally, catalyzes the methylthiolation of an aspartic acid residue of ribosomal protein uS12. This is Ribosomal protein uS12 methylthiotransferase RimO from Bordetella bronchiseptica (strain ATCC BAA-588 / NCTC 13252 / RB50) (Alcaligenes bronchisepticus).